The primary structure comprises 210 residues: Na(+)-translocating NADH-quinone reductase subunit D (210 aa).

Transmembrane regions (helical) follow at residues 42–62 (FVMT…VSLI), 72–92 (IIVQ…VLKA), 103–123 (VFVG…AFAM), 131–151 (LIDG…VGFF), and 178–198 (NGLM…IWVI).

Belongs to the NqrDE/RnfAE family. Composed of six subunits; NqrA, NqrB, NqrC, NqrD, NqrE and NqrF.

Its subcellular location is the cell inner membrane. It catalyses the reaction a ubiquinone + n Na(+)(in) + NADH + H(+) = a ubiquinol + n Na(+)(out) + NAD(+). In terms of biological role, NQR complex catalyzes the reduction of ubiquinone-1 to ubiquinol by two successive reactions, coupled with the transport of Na(+) ions from the cytoplasm to the periplasm. NqrA to NqrE are probably involved in the second step, the conversion of ubisemiquinone to ubiquinol. This Vibrio parahaemolyticus serotype O3:K6 (strain RIMD 2210633) protein is Na(+)-translocating NADH-quinone reductase subunit D.